The primary structure comprises 195 residues: UPF0314 protein RHECIAT_CH0004233 (195 aa).

4 helical membrane-spanning segments follow: residues 15 to 35, 64 to 84, 127 to 147, and 150 to 170; these read FWFVACVAVLVAQIVTEYLMG, WYTPSHIIHGFLFYGLGYLIL, GDSILNSAMDTVFMCVGFFFA, and APVALTVAIAIFFEIFTGYVI.

It belongs to the UPF0314 family.

The protein localises to the cell membrane. In Rhizobium etli (strain CIAT 652), this protein is UPF0314 protein RHECIAT_CH0004233.